The primary structure comprises 158 residues: NAD(P)H-quinone oxidoreductase subunit J, chloroplastic (158 aa).

This sequence belongs to the complex I 30 kDa subunit family. In terms of assembly, NDH is composed of at least 16 different subunits, 5 of which are encoded in the nucleus.

It is found in the plastid. Its subcellular location is the chloroplast thylakoid membrane. The catalysed reaction is a plastoquinone + NADH + (n+1) H(+)(in) = a plastoquinol + NAD(+) + n H(+)(out). The enzyme catalyses a plastoquinone + NADPH + (n+1) H(+)(in) = a plastoquinol + NADP(+) + n H(+)(out). In terms of biological role, NDH shuttles electrons from NAD(P)H:plastoquinone, via FMN and iron-sulfur (Fe-S) centers, to quinones in the photosynthetic chain and possibly in a chloroplast respiratory chain. The immediate electron acceptor for the enzyme in this species is believed to be plastoquinone. Couples the redox reaction to proton translocation, and thus conserves the redox energy in a proton gradient. The protein is NAD(P)H-quinone oxidoreductase subunit J, chloroplastic of Morus indica (Mulberry).